A 78-amino-acid polypeptide reads, in one-letter code: Calcium/calmodulin-dependent protein kinase II inhibitor 1 (78 aa).

The CAMK2 inhibitory domain stretch occupies residues 41-68; it reads NKRPPKLGQIGRSKRVVIEDDRIDDVLK.

Belongs to the CAMK2N family. As to quaternary structure, interacts with CAMK2B; the presence of Ca(2+)/calmodulin increases the interaction but is not essential. Interacts with CAMK2A; this interaction requires CAMK2A activation by Ca(2+).

Its subcellular location is the synapse. The protein resides in the cell projection. It localises to the dendrite. It is found in the postsynaptic density. Potent and specific inhibitor of CaM-kinase II (CAMK2). Plays a role in the maintenance of long-term retrieval-induced memory in response to contextual fear. Modulates blood pressure and vascular reactivity via regulation of CAMK2 activity in addition to regulation of left ventricular mass. Mediates the NLRP3 inflammasome in cardiomyocytes via acting as an inhibitor of the MAPK14/p38 and MAPK8/JNK pathways, thereby regulating ventricular remodeling and cardiac rhythm post-myocardial infarction. Negatively effects insulin sensitivity and promotes lipid formation in adipose tissues independent of CAMK2 signaling. This Bos taurus (Bovine) protein is Calcium/calmodulin-dependent protein kinase II inhibitor 1 (CAMK2N1).